A 377-amino-acid polypeptide reads, in one-letter code: Nitric oxide reductase FlRd-NAD(+) reductase (377 aa).

Belongs to the FAD-dependent oxidoreductase family. The cofactor is FAD.

It is found in the cytoplasm. The enzyme catalyses 2 reduced [nitric oxide reductase rubredoxin domain] + NAD(+) + H(+) = 2 oxidized [nitric oxide reductase rubredoxin domain] + NADH. Its pathway is nitrogen metabolism; nitric oxide reduction. Functionally, one of at least two accessory proteins for anaerobic nitric oxide (NO) reductase. Reduces the rubredoxin moiety of NO reductase. This chain is Nitric oxide reductase FlRd-NAD(+) reductase, found in Escherichia coli O17:K52:H18 (strain UMN026 / ExPEC).